Here is a 196-residue protein sequence, read N- to C-terminus: Molybdenum cofactor guanylyltransferase (196 aa).

Residues 10–12 (LAG), K23, N51, D69, and D99 contribute to the GTP site. D99 is a binding site for Mg(2+).

Belongs to the MobA family. In terms of assembly, monomer. It depends on Mg(2+) as a cofactor.

It localises to the cytoplasm. It carries out the reaction Mo-molybdopterin + GTP + H(+) = Mo-molybdopterin guanine dinucleotide + diphosphate. Its function is as follows. Transfers a GMP moiety from GTP to Mo-molybdopterin (Mo-MPT) cofactor (Moco or molybdenum cofactor) to form Mo-molybdopterin guanine dinucleotide (Mo-MGD) cofactor. This is Molybdenum cofactor guanylyltransferase from Shewanella baltica (strain OS155 / ATCC BAA-1091).